Reading from the N-terminus, the 275-residue chain is Orotidine 5'-phosphate decarboxylase (275 aa).

The Proton donor role is filled by lysine 101.

The protein belongs to the OMP decarboxylase family. Type 2 subfamily.

It carries out the reaction orotidine 5'-phosphate + H(+) = UMP + CO2. The protein operates within pyrimidine metabolism; UMP biosynthesis via de novo pathway; UMP from orotate: step 2/2. The polypeptide is Orotidine 5'-phosphate decarboxylase (Leptospira interrogans serogroup Icterohaemorrhagiae serovar Lai (strain 56601)).